The sequence spans 59 residues: MLSWALIFFIIAIIAAAFGFGGIAVAAAGIAKILFFLFLVMFVIFLIMGLIGRRGPPPV.

The next 2 membrane-spanning stretches (helical) occupy residues 5 to 25 and 30 to 50; these read ALIF…GIAV and IAKI…IMGL.

This sequence belongs to the UPF0391 family.

Its subcellular location is the cell membrane. The sequence is that of UPF0391 membrane protein lpl2443 from Legionella pneumophila (strain Lens).